The primary structure comprises 176 residues: ATP-dependent protease subunit HslV (176 aa).

Residue Thr-5 is part of the active site. 3 residues coordinate Na(+): Ser-161, Cys-164, and Thr-167.

This sequence belongs to the peptidase T1B family. HslV subfamily. As to quaternary structure, a double ring-shaped homohexamer of HslV is capped on each side by a ring-shaped HslU homohexamer. The assembly of the HslU/HslV complex is dependent on binding of ATP.

It localises to the cytoplasm. The enzyme catalyses ATP-dependent cleavage of peptide bonds with broad specificity.. Its activity is regulated as follows. Allosterically activated by HslU binding. In terms of biological role, protease subunit of a proteasome-like degradation complex believed to be a general protein degrading machinery. This Thermoanaerobacter pseudethanolicus (strain ATCC 33223 / 39E) (Clostridium thermohydrosulfuricum) protein is ATP-dependent protease subunit HslV.